Consider the following 120-residue polypeptide: A-type ATP synthase subunit F (120 aa).

The protein belongs to the V-ATPase F subunit family. As to quaternary structure, has multiple subunits with at least A(3), B(3), C, D, E, F, H, I and proteolipid K(x).

It localises to the cell membrane. Its function is as follows. Component of the A-type ATP synthase that produces ATP from ADP in the presence of a proton gradient across the membrane. In Halobacterium salinarum (strain ATCC 29341 / DSM 671 / R1), this protein is A-type ATP synthase subunit F.